Reading from the N-terminus, the 47-residue chain is Large ribosomal subunit protein bL34 (47 aa).

It belongs to the bacterial ribosomal protein bL34 family.

The protein is Large ribosomal subunit protein bL34 (rpmH) of Mycobacterium leprae (strain TN).